The following is a 302-amino-acid chain: Heme A synthase (302 aa).

Over Met-1–Lys-8 the chain is Cytoplasmic. The chain crosses the membrane as a helical span at residues Trp-9–Thr-29. Over Lys-30–Ser-67 the chain is Extracellular. A disulfide bridge connects residues Cys-37 and Cys-44. Glu-60 is an active-site residue. His-63 contacts heme o. Residues Gly-68 to Ile-88 form a helical membrane-spanning segment. Over Lys-89–Pro-93 the chain is Cytoplasmic. Residues Leu-94 to Met-114 form a helical membrane-spanning segment. Over Trp-115–Leu-122 the chain is Extracellular. Residues Ala-123 to Ile-143 form a helical membrane-spanning segment. Residue His-125 coordinates heme o. Residues Tyr-144 to Leu-161 are Cytoplasmic-facing. Residues Arg-162 to Val-182 traverse the membrane as a helical segment. The Extracellular segment spans residues Arg-183 to Arg-215. Heme b is bound at residue His-214. Residues Gly-216–Tyr-236 traverse the membrane as a helical segment. Topologically, residues Arg-237 to Tyr-244 are cytoplasmic. A helical membrane pass occupies residues Gly-245–Ile-265. The Extracellular portion of the chain corresponds to Thr-266–Phe-271. A helical transmembrane segment spans residues Ile-272–Ile-292. His-276 contacts heme b. Over Leu-293–Gly-302 the chain is Cytoplasmic.

This sequence belongs to the COX15/CtaA family. Type 1 subfamily. Interacts with CtaB. It depends on heme b as a cofactor.

The protein resides in the cell membrane. The catalysed reaction is Fe(II)-heme o + 2 A + H2O = Fe(II)-heme a + 2 AH2. It functions in the pathway porphyrin-containing compound metabolism; heme A biosynthesis; heme A from heme O: step 1/1. Catalyzes the conversion of heme O to heme A by two successive hydroxylations of the methyl group at C8. The first hydroxylation forms heme I, the second hydroxylation results in an unstable dihydroxymethyl group, which spontaneously dehydrates, resulting in the formyl group of heme A. This Staphylococcus saprophyticus subsp. saprophyticus (strain ATCC 15305 / DSM 20229 / NCIMB 8711 / NCTC 7292 / S-41) protein is Heme A synthase.